We begin with the raw amino-acid sequence, 204 residues long: Superoxide dismutase [Mn] (204 aa).

Residue histidine 27 participates in Mn(2+) binding. A phosphothreonine mark is found at threonine 34 and threonine 70. Mn(2+) is bound by residues histidine 82, aspartate 164, and histidine 168.

This sequence belongs to the iron/manganese superoxide dismutase family. Homodimer. Mn(2+) serves as cofactor.

It catalyses the reaction 2 superoxide + 2 H(+) = H2O2 + O2. Its function is as follows. Destroys superoxide anion radicals which are normally produced within the cells and which are toxic to biological systems. This Geobacillus stearothermophilus (Bacillus stearothermophilus) protein is Superoxide dismutase [Mn] (sodA).